A 179-amino-acid chain; its full sequence is Adaptation to cold protein A (179 aa).

A disordered region spans residues 133 to 179 (KATPAPKRSADDDFEDEDSDYADYSDDDDDEGEEEDGYYDHYDDEDR). Over residues 144-179 (DDFEDEDSDYADYSDDDDDEGEEEDGYYDHYDDEDR) the composition is skewed to acidic residues.

Its function is as follows. Part of an operon involved in cold adaptation. The polypeptide is Adaptation to cold protein A (Shewanella oneidensis (strain ATCC 700550 / JCM 31522 / CIP 106686 / LMG 19005 / NCIMB 14063 / MR-1)).